The following is a 103-amino-acid chain: MSNKQKIRIRLKAFDHQVLDQSAEKIVETAKRTGAKVSGPVPLPTEKEIITILRAPHKYKDSREQFEMRTHKRLIDVVLPTPKTVDALMRLDLPAGVDIEIKL.

Belongs to the universal ribosomal protein uS10 family. Part of the 30S ribosomal subunit.

Involved in the binding of tRNA to the ribosomes. The sequence is that of Small ribosomal subunit protein uS10 from Ruminiclostridium cellulolyticum (strain ATCC 35319 / DSM 5812 / JCM 6584 / H10) (Clostridium cellulolyticum).